We begin with the raw amino-acid sequence, 91 residues long: Uteroglobin (91 aa).

A signal peptide spans 1 to 21 (MKLTITLALVTLALLCSPASA).

It belongs to the secretoglobin family. In terms of assembly, antiparallel homodimer; disulfide-linked. Interaction with LMBR1L is controversial.

It is found in the secreted. Uteroglobin binds progesterone specifically and with high affinity. It may regulate progesterone concentrations reaching the blastocyst. It is also a potent inhibitor of phospholipase A2. The sequence is that of Uteroglobin (SCGB1A1) from Lepus capensis (Brown hare).